A 433-amino-acid polypeptide reads, in one-letter code: Tol-Pal system protein TolB (433 aa).

The first 21 residues, 1 to 21, serve as a signal peptide directing secretion; it reads MINLFRGLLVVLCFASAMVSA.

It belongs to the TolB family. In terms of assembly, the Tol-Pal system is composed of five core proteins: the inner membrane proteins TolA, TolQ and TolR, the periplasmic protein TolB and the outer membrane protein Pal. They form a network linking the inner and outer membranes and the peptidoglycan layer.

It is found in the periplasm. Part of the Tol-Pal system, which plays a role in outer membrane invagination during cell division and is important for maintaining outer membrane integrity. This Pseudomonas syringae pv. syringae (strain B728a) protein is Tol-Pal system protein TolB.